The chain runs to 412 residues: Alanyl-tRNA editing protein Aarsd1 (412 aa).

Residues His-109 and His-113 each coordinate Zn(2+). Position 174 is a phosphoserine (Ser-174). Zn(2+)-binding residues include Cys-209 and His-213.

It belongs to the class-II aminoacyl-tRNA synthetase family. Alax-L subfamily. Zn(2+) serves as cofactor.

It localises to the cytoplasm. In terms of biological role, functions in trans to edit the amino acid moiety from incorrectly charged Ser-tRNA(Ala). The chain is Alanyl-tRNA editing protein Aarsd1 (Aarsd1) from Mus musculus (Mouse).